The following is a 117-amino-acid chain: MRHRKAGRKFGRRTNPRKNLFRNLAVSLILHERMTTTLAKAKTIQPIVERLVTLAREDTDHHRRLAWAQLGDQRAVAKLFDVIAPRFVGQPGGYTRIYRIGQRRGDGAPLALIEFVA.

This sequence belongs to the bacterial ribosomal protein bL17 family. In terms of assembly, part of the 50S ribosomal subunit. Contacts protein L32.

In Thermomicrobium roseum (strain ATCC 27502 / DSM 5159 / P-2), this protein is Large ribosomal subunit protein bL17.